The chain runs to 229 residues: Small ribosomal subunit protein uS2c (229 aa).

This sequence belongs to the universal ribosomal protein uS2 family.

The protein resides in the plastid. The protein localises to the chloroplast. The polypeptide is Small ribosomal subunit protein uS2c (rps2) (Trieres chinensis (Marine centric diatom)).